The primary structure comprises 153 residues: UPF0756 membrane protein BCB4264_A4705 (153 aa).

The next 4 membrane-spanning stretches (helical) occupy residues 8 to 28 (FLFI…TVAI), 54 to 74 (LGVT…EIGF), 87 to 107 (WIAL…VQLL), and 117 to 137 (LVFG…GPLI).

Belongs to the UPF0756 family.

Its subcellular location is the cell membrane. In Bacillus cereus (strain B4264), this protein is UPF0756 membrane protein BCB4264_A4705.